A 400-amino-acid chain; its full sequence is Spermatogenic leucine zipper protein 1 (400 aa).

A disordered region spans residues 1 to 27 (MADSDSSSEMPAHSPSPSPIPCAKQKP). The residue at position 106 (serine 106) is a Phosphoserine. The helix-loop-helix motif stretch occupies residues 116 to 127 (RNKLRFKDDLFI). A basic motif region spans residues 128 to 193 (HFDPERENTM…HIRGEYRKLR (66 aa)). Coiled-coil stretches lie at residues 182 to 231 (SVHI…KDIV) and 268 to 293 (LIAA…LHLH). The residue at position 207 (serine 207) is a Phosphoserine. Positions 252–273 (LEEQVKKLSQDTHSLHLIAALL) are leucine-zipper. The tract at residues 295 to 332 (AGPGHEKPLQTSGEQDKKCGEQDKKCGEQDKKCGEQDK) is disordered.

In terms of assembly, interacts with PPP1CC isoform gamma-2. Phosphorylated by MAPK1/ERK2 and MAPK3/ERK1.

It localises to the cytoplasm. The protein localises to the nucleus. In terms of biological role, transcription factor that binds to the DNA sequence 5'-CANNTG-3'(E box) and the G-box motif. May play an important role in the regulation of cell proliferation and differentiation during spermatogenesis. The chain is Spermatogenic leucine zipper protein 1 (Spz1) from Rattus norvegicus (Rat).